The following is a 477-amino-acid chain: Cytochrome P450 716A1 (477 aa).

The chain crosses the membrane as a helical span at residues 2–22 (YMAIMIILFLSSILLSLLLLL). Cys-424 is a binding site for heme.

Belongs to the cytochrome P450 family. Heme is required as a cofactor.

The protein resides in the membrane. In terms of biological role, possesses triterpene oxidizing activity. Catalyzes the C28 hydroxylation of alpha-amyrin, beta-amyrin, and lupeol, producing uvaol, erythrodiol, and betulin, respectively. Catalyzes the C28 carboxylation of alpha- and beta-amyrin. This Arabidopsis thaliana (Mouse-ear cress) protein is Cytochrome P450 716A1.